The sequence spans 207 residues: Small ribosomal subunit protein uS5 (207 aa).

A disordered region spans residues 1–51 (MTDTPTKQEITSKNDKVPGAIPGEQKKNNRNNDRKRNRRGDSKNLERDSDW). A compositionally biased stretch (basic and acidic residues) spans 24-51 (EQKKNNRNNDRKRNRRGDSKNLERDSDW). Residues 51–114 (WQERVVQIRR…SDGKKNLVRV (64 aa)) form the S5 DRBM domain.

Belongs to the universal ribosomal protein uS5 family. Part of the 30S ribosomal subunit. Contacts proteins S4 and S8.

Functionally, with S4 and S12 plays an important role in translational accuracy. Its function is as follows. Located at the back of the 30S subunit body where it stabilizes the conformation of the head with respect to the body. The chain is Small ribosomal subunit protein uS5 from Prochlorococcus marinus (strain MIT 9312).